Reading from the N-terminus, the 111-residue chain is Nucleoid-associated protein NMC1380 (111 aa).

It belongs to the YbaB/EbfC family. In terms of assembly, homodimer.

The protein localises to the cytoplasm. Its subcellular location is the nucleoid. In terms of biological role, binds to DNA and alters its conformation. May be involved in regulation of gene expression, nucleoid organization and DNA protection. The protein is Nucleoid-associated protein NMC1380 of Neisseria meningitidis serogroup C / serotype 2a (strain ATCC 700532 / DSM 15464 / FAM18).